A 124-amino-acid chain; its full sequence is S-adenosylmethionine decarboxylase proenzyme (124 aa).

Ser-63 (schiff-base intermediate with substrate; via pyruvic acid) is an active-site residue. Ser-63 carries the post-translational modification Pyruvic acid (Ser); by autocatalysis. Residue His-68 is the Proton acceptor; for processing activity of the active site. The active-site Proton donor; for catalytic activity is the Cys-83.

The protein belongs to the prokaryotic AdoMetDC family. Type 1 subfamily. As to quaternary structure, heterotetramer of two alpha and two beta chains arranged as a dimer of alpha/beta heterodimers. It depends on pyruvate as a cofactor. Post-translationally, is synthesized initially as an inactive proenzyme. Formation of the active enzyme involves a self-maturation process in which the active site pyruvoyl group is generated from an internal serine residue via an autocatalytic post-translational modification. Two non-identical subunits are generated from the proenzyme in this reaction, and the pyruvate is formed at the N-terminus of the alpha chain, which is derived from the carboxyl end of the proenzyme. The post-translation cleavage follows an unusual pathway, termed non-hydrolytic serinolysis, in which the side chain hydroxyl group of the serine supplies its oxygen atom to form the C-terminus of the beta chain, while the remainder of the serine residue undergoes an oxidative deamination to produce ammonia and the pyruvoyl group blocking the N-terminus of the alpha chain.

The enzyme catalyses S-adenosyl-L-methionine + H(+) = S-adenosyl 3-(methylsulfanyl)propylamine + CO2. Its pathway is amine and polyamine biosynthesis; S-adenosylmethioninamine biosynthesis; S-adenosylmethioninamine from S-adenosyl-L-methionine: step 1/1. Functionally, catalyzes the decarboxylation of S-adenosylmethionine to S-adenosylmethioninamine (dcAdoMet), the propylamine donor required for the synthesis of the polyamines spermine and spermidine from the diamine putrescine. This chain is S-adenosylmethionine decarboxylase proenzyme, found in Caldicellulosiruptor bescii (strain ATCC BAA-1888 / DSM 6725 / KCTC 15123 / Z-1320) (Anaerocellum thermophilum).